A 327-amino-acid chain; its full sequence is MRASIWGTGSYLPKKILTNADLEKIVETSDEWISTRTGIKERRIASAEEFSSFMGAKAAEKAIEAAKISKSQVDCIVFSTAAPDYIFPSSAALAQAYLGIKEIPAFDCLAACTGFLYGLSIAKAYVESGMYQCVLVIAADKLSSFVNYQDRNTCVLFGDGGSACIVGHSRPGALEISKVNLGADGKQGDLLRLPAGGSRCPASQDTVQNHQHFITMEGKEVFKHAVRRMEFAAKTCITEAGLQEKDIDWLVPHQANERIIDAIAKRFAVKDSRVFKTLAKYGNTAASSVGIALDELLRTHDIHVAERLLLVAFGGGLSWGAVILQQV.

Active-site residues include C112 and H253. Residues Q254–R258 form an ACP-binding region. Residue N283 is part of the active site.

This sequence belongs to the thiolase-like superfamily. FabH family. In terms of assembly, homodimer.

It is found in the cytoplasm. It catalyses the reaction malonyl-[ACP] + acetyl-CoA + H(+) = 3-oxobutanoyl-[ACP] + CO2 + CoA. Its pathway is lipid metabolism; fatty acid biosynthesis. Functionally, catalyzes the condensation reaction of fatty acid synthesis by the addition to an acyl acceptor of two carbons from malonyl-ACP. Catalyzes the first condensation reaction which initiates fatty acid synthesis and may therefore play a role in governing the total rate of fatty acid production. Possesses both acetoacetyl-ACP synthase and acetyl transacylase activities. Its substrate specificity determines the biosynthesis of branched-chain and/or straight-chain of fatty acids. This Chlamydia trachomatis serovar A (strain ATCC VR-571B / DSM 19440 / HAR-13) protein is Beta-ketoacyl-[acyl-carrier-protein] synthase III.